The sequence spans 606 residues: NADH-ubiquinone oxidoreductase chain 5 (606 aa).

The next 15 helical transmembrane spans lie at 3 to 23 (VINLIPTLMLTSLIILTLPII), 38 to 58 (ITKTAVTYAFAISLIPTLLFI), 87 to 107 (FFSLTFMPIALFITWSIMEFS), 124 to 144 (LLLFLITMLILVSANNLLQLF), 180 to 200 (IGDMGFIMMMAWFTIHLNSWE), 216 to 236 (LLGLLLASAGKSAQFGLHPWL), 244 to 264 (TPVSALLHSSTMVMAGVFTLI), 276 to 296 (IQTSTLCLGAITTLFTAICAL), 304 to 323 (IIALSTSSQLGLMMVTIGIN), 328 to 350 (AFIHMCTHAFFKAMLFLSSGSII), 369 to 389 (MPITSTAIIIGSLALTGMPFL), 404 to 424 (MSYINTWALLITLIAVSMTAS), 460 to 480 (LILGSIFMGFLISMNTIPHTT), 483 to 503 (MTMPPHLKFMALAVTLLGFTV), and 586 to 606 (LMKLYFLSFLLSITLGLLIAL).

It belongs to the complex I subunit 5 family. In terms of assembly, core subunit of respiratory chain NADH dehydrogenase (Complex I) which is composed of 45 different subunits.

The protein resides in the mitochondrion inner membrane. The enzyme catalyses a ubiquinone + NADH + 5 H(+)(in) = a ubiquinol + NAD(+) + 4 H(+)(out). Core subunit of the mitochondrial membrane respiratory chain NADH dehydrogenase (Complex I) which catalyzes electron transfer from NADH through the respiratory chain, using ubiquinone as an electron acceptor. Essential for the catalytic activity and assembly of complex I. The polypeptide is NADH-ubiquinone oxidoreductase chain 5 (MT-ND5) (Loxodonta africana (African elephant)).